We begin with the raw amino-acid sequence, 286 residues long: Protein GrpE (286 aa).

Disordered regions lie at residues 1–51 (MSED…ETTA) and 260–286 (VAAP…QPTT). Low complexity-rich tracts occupy residues 39–50 (QPSSTPQTPETT) and 271–286 (TEST…QPTT).

This sequence belongs to the GrpE family. As to quaternary structure, homodimer.

The protein resides in the cytoplasm. Participates actively in the response to hyperosmotic and heat shock by preventing the aggregation of stress-denatured proteins, in association with DnaK and GrpE. It is the nucleotide exchange factor for DnaK and may function as a thermosensor. Unfolded proteins bind initially to DnaJ; upon interaction with the DnaJ-bound protein, DnaK hydrolyzes its bound ATP, resulting in the formation of a stable complex. GrpE releases ADP from DnaK; ATP binding to DnaK triggers the release of the substrate protein, thus completing the reaction cycle. Several rounds of ATP-dependent interactions between DnaJ, DnaK and GrpE are required for fully efficient folding. The protein is Protein GrpE of Gloeothece citriformis (strain PCC 7424) (Cyanothece sp. (strain PCC 7424)).